Consider the following 255-residue polypeptide: 5'-nucleotidase SurE (255 aa).

A divalent metal cation contacts are provided by aspartate 8, aspartate 9, serine 39, and asparagine 95.

It belongs to the SurE nucleotidase family. A divalent metal cation serves as cofactor.

The protein localises to the cytoplasm. It carries out the reaction a ribonucleoside 5'-phosphate + H2O = a ribonucleoside + phosphate. Functionally, nucleotidase that shows phosphatase activity on nucleoside 5'-monophosphates. The polypeptide is 5'-nucleotidase SurE (Thermosipho africanus (strain TCF52B)).